Consider the following 331-residue polypeptide: Phenylalanine--tRNA ligase alpha subunit (331 aa).

Residue Glu252 participates in Mg(2+) binding.

Belongs to the class-II aminoacyl-tRNA synthetase family. Phe-tRNA synthetase alpha subunit type 1 subfamily. Tetramer of two alpha and two beta subunits. It depends on Mg(2+) as a cofactor.

It is found in the cytoplasm. It carries out the reaction tRNA(Phe) + L-phenylalanine + ATP = L-phenylalanyl-tRNA(Phe) + AMP + diphosphate + H(+). The protein is Phenylalanine--tRNA ligase alpha subunit of Stenotrophomonas maltophilia (strain R551-3).